Reading from the N-terminus, the 211-residue chain is MYQPDFPPVPFRLGLYPVVDSVQWIERLLDAGVRTLQLRIKDRRDEEVEADVVAAIALGRRYNARLFINDYWRLAIKHQAYGVHLGQEDLQATDLNAIRAAGLRLGVSTHDDMEIDVALAARPSYIALGHVFPTQTKQMPSAPQGLEQLARHVERLADYPTVAIGGVSLARAPAVIATGVGSIAVVSAITQAADWRLATAQLLEIAGVGDE.

4-amino-2-methyl-5-(diphosphooxymethyl)pyrimidine contacts are provided by residues 37 to 41 and Asn69; that span reads QLRIK. 2 residues coordinate Mg(2+): Asp70 and Asp89. Position 108 (Ser108) interacts with 4-amino-2-methyl-5-(diphosphooxymethyl)pyrimidine. Residue 134–136 coordinates 2-[(2R,5Z)-2-carboxy-4-methylthiazol-5(2H)-ylidene]ethyl phosphate; sequence TQT. Lys137 contributes to the 4-amino-2-methyl-5-(diphosphooxymethyl)pyrimidine binding site. Residues Gly166 and 186–187 contribute to the 2-[(2R,5Z)-2-carboxy-4-methylthiazol-5(2H)-ylidene]ethyl phosphate site; that span reads VS.

This sequence belongs to the thiamine-phosphate synthase family. The cofactor is Mg(2+).

It catalyses the reaction 2-[(2R,5Z)-2-carboxy-4-methylthiazol-5(2H)-ylidene]ethyl phosphate + 4-amino-2-methyl-5-(diphosphooxymethyl)pyrimidine + 2 H(+) = thiamine phosphate + CO2 + diphosphate. The catalysed reaction is 2-(2-carboxy-4-methylthiazol-5-yl)ethyl phosphate + 4-amino-2-methyl-5-(diphosphooxymethyl)pyrimidine + 2 H(+) = thiamine phosphate + CO2 + diphosphate. It carries out the reaction 4-methyl-5-(2-phosphooxyethyl)-thiazole + 4-amino-2-methyl-5-(diphosphooxymethyl)pyrimidine + H(+) = thiamine phosphate + diphosphate. It participates in cofactor biosynthesis; thiamine diphosphate biosynthesis; thiamine phosphate from 4-amino-2-methyl-5-diphosphomethylpyrimidine and 4-methyl-5-(2-phosphoethyl)-thiazole: step 1/1. In terms of biological role, condenses 4-methyl-5-(beta-hydroxyethyl)thiazole monophosphate (THZ-P) and 2-methyl-4-amino-5-hydroxymethyl pyrimidine pyrophosphate (HMP-PP) to form thiamine monophosphate (TMP). This chain is Thiamine-phosphate synthase, found in Escherichia coli O9:H4 (strain HS).